The following is a 59-amino-acid chain: Probable stress-associated endoplasmic reticulum protein (59 aa).

The tract at residues M1–E30 is disordered. Over M1–N34 the chain is Cytoplasmic. Residues E16–E30 are compositionally biased toward basic and acidic residues. Residues I35–I55 traverse the membrane as a helical; Anchor for type IV membrane protein segment. The Extracellular portion of the chain corresponds to L56–Q59.

This sequence belongs to the RAMP4 family.

Its subcellular location is the membrane. It is found in the endoplasmic reticulum membrane. In terms of biological role, may interact with target proteins during translocation into the lumen of the endoplasmic reticulum. May protect unfolded target proteins against degradation and facilitate correct glycosylation. In Dictyostelium discoideum (Social amoeba), this protein is Probable stress-associated endoplasmic reticulum protein (serp).